We begin with the raw amino-acid sequence, 222 residues long: Methionine import system permease protein MetP (222 aa).

The region spanning 18 to 212 (TYETLYMTLI…IIVFIIQIIG (195 aa)) is the ABC transmembrane type-1 domain. The next 5 membrane-spanning stretches (helical) occupy residues 25-45 (TLIS…LLFL), 73-93 (FLIL…TILG), 97-117 (ALPA…EIAL), 152-172 (ISGI…AGAI), and 195-215 (FVAT…GDLI).

It belongs to the binding-protein-dependent transport system permease family. CysTW subfamily. The complex is composed of two ATP-binding proteins (MetN), two transmembrane proteins (MetP) and a solute-binding protein (MetQ).

Its subcellular location is the cell membrane. Functionally, part of the ABC transporter complex MetNPQ involved in methionine import. Responsible for the translocation of the substrate across the membrane. It has also been shown to be involved in methionine sulfoxide transport. The sequence is that of Methionine import system permease protein MetP (metP) from Bacillus subtilis (strain 168).